Here is an 856-residue protein sequence, read N- to C-terminus: Alginate lyase 7 (856 aa).

PbH1 repeat units lie at residues 133–155 (DYNVTVERVEIREVSRYAFDPHE), 157–179 (TINLTIRDSVAHDNGKDGFVADF), 180–202 (QIGAVFENNVSYNNGRHGFNIVT), 204–226 (SHDIVFTNNVAYGNGANGLVVQR), 234–256 (VYNVEIEGGSFHDNGQEGVLIKM), 257–279 (STDVTLQGAEIYGNGYAGVRVQG), 280–304 (VEDVRILDNYIHDNAQSKANAEVIV), and 320–342 (TQNVTVKGNTIVGSANSTYGIQE). 9 Hemolysin-type calcium-binding repeats span residues 387–402 (GSTGNDLLTGTPIADL), 404–421 (VGGSGNDTLSGDAGNDVL), 422–439 (EGGAGSDRLTGGEGADIF), 538–549 (GTEGDDSLTGNA), 554–563 (LDGGSGNDSL), 565–581 (GGLGNDVLRGGAGDDIL), 582–599 (NGGLGRDQLSGGEGADIF), 715–731 (GGAGRDILNGGAGDDIL), and 733–749 (GGSERDTLTGGSGADVF).

It belongs to the D-mannuronate C5-epimerase family. It depends on Ca(2+) as a cofactor.

Its subcellular location is the secreted. The catalysed reaction is Eliminative cleavage of alginate to give oligosaccharides with 4-deoxy-alpha-L-erythro-hex-4-enuronosyl groups at their non-reducing ends and beta-D-mannuronate at their reducing end.. It catalyses the reaction [(1-&gt;4)-beta-D-mannuronosyl](n) = [alginate](n). It functions in the pathway glycan biosynthesis; alginate biosynthesis. Inhibited by zinc. Converts beta-D-mannuronic acid (M) to alpha-L-guluronic acid (G). Has both epimerase and lyase activities. Contributes to abortive encystment by degrading the coat from inside the cyst. Important for cyst germination. This is Alginate lyase 7 from Azotobacter vinelandii.